Consider the following 292-residue polypeptide: Sulfhydrogenase 1 subunit gamma (292 aa).

Positions 15 to 115 (YALHRVKVLK…RGPYGNGFPV (101 aa)) constitute an FAD-binding FR-type domain. Positions 253, 258, 261, and 273 each coordinate [2Fe-2S] cluster.

As to quaternary structure, heterotetramer of alpha, beta, gamma and delta subunits. The nickel-containing alpha and delta subunits constitute the hydrogenase activity. The beta and gamma subunits (flavin-containing dimer) constitute the sulfur reductase activity. Requires FAD as cofactor. It depends on [2Fe-2S] cluster as a cofactor.

It is found in the cytoplasm. It carries out the reaction n sulfur + H2 = (n-1) sulfur + hydrogen sulfide + H(+). Stimulated by rubredoxin at pH 7.6 but not ferredoxin. In terms of biological role, part of a bifunctional enzyme complex that functions as an NADPH-dependent hydrogen-evolving hydrogenase with sulfur reducing activity. May play a role in hydrogen cycling during fermentative growth. Activity not exhibited with NAD. The beta and gamma subunits form the sulfur reducing component that catalyzes the cytoplasmic production of hydrogen sulfide in the presence of elemental sulfur. Not active in the presence of sodium sulfate, sodium sulfite, sodium thiosulfate or cysteine. This Pyrococcus furiosus (strain ATCC 43587 / DSM 3638 / JCM 8422 / Vc1) protein is Sulfhydrogenase 1 subunit gamma.